A 434-amino-acid polypeptide reads, in one-letter code: Isocitrate lyase (434 aa).

91–93 (SGW) is a binding site for substrate. Asp-157 lines the Mg(2+) pocket. Cys-195 functions as the Proton acceptor in the catalytic mechanism. Substrate-binding positions include 196–197 (GH), Arg-232, 317–321 (NCSPS), and Thr-351.

Belongs to the isocitrate lyase/PEP mutase superfamily. Isocitrate lyase family. Homotetramer. Mg(2+) is required as a cofactor.

It catalyses the reaction D-threo-isocitrate = glyoxylate + succinate. It participates in carbohydrate metabolism; glyoxylate cycle; (S)-malate from isocitrate: step 1/2. Its function is as follows. Involved in the metabolic adaptation in response to environmental changes. Catalyzes the reversible formation of succinate and glyoxylate from isocitrate, a key step of the glyoxylate cycle, which operates as an anaplerotic route for replenishing the tricarboxylic acid cycle during growth on fatty acid substrates. The protein is Isocitrate lyase (aceA) of Escherichia coli O6:H1 (strain CFT073 / ATCC 700928 / UPEC).